Reading from the N-terminus, the 305-residue chain is Urease accessory protein UreD (305 aa).

Belongs to the UreD family. UreD, UreF and UreG form a complex that acts as a GTP-hydrolysis-dependent molecular chaperone, activating the urease apoprotein by helping to assemble the nickel containing metallocenter of UreC. The UreE protein probably delivers the nickel.

Its subcellular location is the cytoplasm. Functionally, required for maturation of urease via the functional incorporation of the urease nickel metallocenter. This chain is Urease accessory protein UreD, found in Delftia acidovorans (strain DSM 14801 / SPH-1).